The sequence spans 417 residues: Serine hydroxymethyltransferase (417 aa).

(6S)-5,6,7,8-tetrahydrofolate contacts are provided by residues Leu-121 and 125-127; that span reads GHL. An N6-(pyridoxal phosphate)lysine modification is found at Lys-229. 355-357 lines the (6S)-5,6,7,8-tetrahydrofolate pocket; it reads SPF.

Belongs to the SHMT family. In terms of assembly, homodimer. Pyridoxal 5'-phosphate is required as a cofactor.

It localises to the cytoplasm. It catalyses the reaction (6R)-5,10-methylene-5,6,7,8-tetrahydrofolate + glycine + H2O = (6S)-5,6,7,8-tetrahydrofolate + L-serine. The protein operates within one-carbon metabolism; tetrahydrofolate interconversion. It functions in the pathway amino-acid biosynthesis; glycine biosynthesis; glycine from L-serine: step 1/1. Its function is as follows. Catalyzes the reversible interconversion of serine and glycine with tetrahydrofolate (THF) serving as the one-carbon carrier. This reaction serves as the major source of one-carbon groups required for the biosynthesis of purines, thymidylate, methionine, and other important biomolecules. Also exhibits THF-independent aldolase activity toward beta-hydroxyamino acids, producing glycine and aldehydes, via a retro-aldol mechanism. This Salmonella arizonae (strain ATCC BAA-731 / CDC346-86 / RSK2980) protein is Serine hydroxymethyltransferase.